Consider the following 80-residue polypeptide: Small ribosomal subunit protein bS16 (80 aa).

Belongs to the bacterial ribosomal protein bS16 family.

This chain is Small ribosomal subunit protein bS16, found in Blochmanniella pennsylvanica (strain BPEN).